We begin with the raw amino-acid sequence, 488 residues long: MRILKSHPLLKIVNSYIIDSPQPANLSYLWNFGSLLALCLGIQIVTGVTLAMHYTPSVSEAFNSVEHIMRDVNNGWLVRYLHSNTASAFFFLVYLHIGRGLYYGSYKTPRTLTWAIGTVILIVMMATAFLGYVLPYGQMSLWGATVITNLMSAIPWIGQDIVEFIWGGLYTDEPQCGDVLLKILLNAGKSPILGFAYDLFFIIVLLIGVKIAMTRGKSAGVRSLHTSEASQRLHAGDLTYAYLVGLFEGDGYFSITKKGKYLTYELGIELSIKDVQLIYKIKKILGIGIVSFRKINEIEMVALRIRDKNHLKSFILPIFEKYPMFSNKQYDYLRFRNALLSGIISLEDLPDYTRSDEPLNSIESIINTSYFSAWLVGFIEAEGCFSVYKLNKDDDYLIASFDIAQRDGDILISAIRKYLSFTTKVYLDKTNCSKLKVTSVRSVENIIKFLQNAPVKLLGNKKLQYLLWLKQLRKISRYSEKIKIPSNY.

Positions 1 to 169 are cobA exon 1 encoded; it reads MRILKSHPLL…DIVEFIWGGL (169 aa). The cobA intron encoded stretch occupies residues 170-488; that stretch reads YTDEPQCGDV…SEKIKIPSNY (319 aa).

In the C-terminal section; belongs to the LAGLIDADG endonuclease family. As to quaternary structure, homodimer. Mg(2+) is required as a cofactor. The mature protein may arise from proteolytic cleavage of an in-frame translation of cobA exon 1 plus intron, containing the I-AniI open reading frame. Cleavage may take place close to Met-213 resulting in an active endonuclease/maturase of about 30 kDa.

It localises to the mitochondrion. Mitochondrial DNA endonuclease and mRNA maturase involved in intron homing and required for splicing of the cytochrome b (cobA) gene intron, containing its own coding sequence. The protein stimulates the intrinsic ribozyme activity of the intron through binding to and stabilizing specific secondary and tertiary structure elements in the RNA. As an endonuclease it introduces a specific double-strand break at the junction of the two exons the cobA gene and thus mediates the insertion of an intron, containing its own coding sequence (group I intron), into an intronless gene. Recognizes with limited specificity and cleaves the sequence 5'-GAGGAGGTTTCTCTGTA-3'. The proteins RNA and DNA recognition and binding surfaces are independent. This is Intron-encoded DNA endonuclease I-AniI (I-AniI) from Emericella nidulans (Aspergillus nidulans).